A 242-amino-acid chain; its full sequence is Ribosomal RNA small subunit methyltransferase G (242 aa).

Residues glycine 81, phenylalanine 86, 104–106 (DST), 132–133 (AE), and arginine 151 each bind S-adenosyl-L-methionine.

Belongs to the methyltransferase superfamily. RNA methyltransferase RsmG family.

The protein localises to the cytoplasm. In terms of biological role, specifically methylates the N7 position of a guanine in 16S rRNA. The polypeptide is Ribosomal RNA small subunit methyltransferase G (Synechococcus elongatus (strain ATCC 33912 / PCC 7942 / FACHB-805) (Anacystis nidulans R2)).